The following is a 90-amino-acid chain: MPKADIHPEWYPEAKVYCNGEVVMTVGSTQPEIHVDVWSGNHPYFTGTQKIIDTEGRVERFMRKYSKQEGSGSKSNKSKSTKSKKGKGKK.

The interval 65–90 is disordered; that stretch reads YSKQEGSGSKSNKSKSTKSKKGKGKK. Positions 76 to 90 are enriched in basic residues; that stretch reads NKSKSTKSKKGKGKK.

Belongs to the bacterial ribosomal protein bL31 family. Type A subfamily. In terms of assembly, part of the 50S ribosomal subunit.

Its function is as follows. Binds the 23S rRNA. In Trichodesmium erythraeum (strain IMS101), this protein is Large ribosomal subunit protein bL31.